A 94-amino-acid chain; its full sequence is (2R)-sulfolactate sulfo-lyase subunit alpha (94 aa).

An AFP-like domain is found at 16 to 90 (VVVVEGVEAG…GEHVHVHNVK (75 aa)).

(2R)-sulfolactate sulfo-lyase is composed of a SuyA and a SuyB subunit.

It localises to the cytoplasm. It carries out the reaction (2R)-3-sulfolactate = sulfite + pyruvate + H(+). Together with SuyB, desulfonates sulfolactate to pyruvate and sulfite. In Chromohalobacter salexigens (strain ATCC BAA-138 / DSM 3043 / CIP 106854 / NCIMB 13768 / 1H11), this protein is (2R)-sulfolactate sulfo-lyase subunit alpha (suyA).